Consider the following 28-residue polypeptide: Arylalkyl acylamidase (28 aa).

In terms of assembly, homotetramer.

The enzyme catalyses an N-acetylarylalkylamine + H2O = an aralkylamine + acetate. With respect to regulation, activated by divalent metal ions. Inhibited by certain thiol reagents. Functionally, shows a strict specificity for N-acetyl arylalkylamines but not acetanilide derivatives. The chain is Arylalkyl acylamidase from Pseudomonas putida (Arthrobacter siderocapsulatus).